Reading from the N-terminus, the 1204-residue chain is Integrator complex subunit 2 (1204 aa).

A helical transmembrane segment spans residues F428–S444.

Belongs to the Integrator subunit 2 family. As to quaternary structure, component of the Integrator complex, composed of core subunits INTS1, INTS2, INTS3, INTS4, INTS5, INTS6, INTS7, INTS8, INTS9/RC74, INTS10, INTS11/CPSF3L, INTS12, INTS13, INTS14 and INTS15. The core complex associates with protein phosphatase 2A subunits PPP2CA and PPP2R1A, to form the Integrator-PP2A (INTAC) complex.

It is found in the nucleus. The protein localises to the nucleus membrane. Its subcellular location is the cytoplasm. Functionally, component of the integrator complex, a multiprotein complex that terminates RNA polymerase II (Pol II) transcription in the promoter-proximal region of genes. The integrator complex provides a quality checkpoint during transcription elongation by driving premature transcription termination of transcripts that are unfavorably configured for transcriptional elongation: the complex terminates transcription by (1) catalyzing dephosphorylation of the C-terminal domain (CTD) of Pol II subunit POLR2A/RPB1 and SUPT5H/SPT5, (2) degrading the exiting nascent RNA transcript via endonuclease activity and (3) promoting the release of Pol II from bound DNA. The integrator complex is also involved in terminating the synthesis of non-coding Pol II transcripts, such as enhancer RNAs (eRNAs), small nuclear RNAs (snRNAs), telomerase RNAs and long non-coding RNAs (lncRNAs). Mediates recruitment of cytoplasmic dynein to the nuclear envelope, probably as component of the integrator complex. This is Integrator complex subunit 2 from Homo sapiens (Human).